The primary structure comprises 138 residues: Transcription antitermination protein NusB (138 aa).

Belongs to the NusB family.

Its function is as follows. Involved in transcription antitermination. Required for transcription of ribosomal RNA (rRNA) genes. Binds specifically to the boxA antiterminator sequence of the ribosomal RNA (rrn) operons. In Serratia proteamaculans (strain 568), this protein is Transcription antitermination protein NusB.